Consider the following 556-residue polypeptide: Phenylalanine--tRNA ligase beta subunit (556 aa).

One can recognise a B5 domain in the interval 269-345 (MEPEEVVYDV…MGYGYERIEP (77 aa)). Mg(2+) is bound by residues D323, D329, E332, and E333.

The protein belongs to the phenylalanyl-tRNA synthetase beta subunit family. Type 2 subfamily. As to quaternary structure, tetramer of two alpha and two beta subunits. It depends on Mg(2+) as a cofactor.

It is found in the cytoplasm. The enzyme catalyses tRNA(Phe) + L-phenylalanine + ATP = L-phenylalanyl-tRNA(Phe) + AMP + diphosphate + H(+). In Thermofilum pendens (strain DSM 2475 / Hrk 5), this protein is Phenylalanine--tRNA ligase beta subunit.